The sequence spans 31 residues: Cycloviolin-A (31 aa).

Residues 1 to 31 (GVIPCGESCVFIPCISAAIGCSCKNKVCYRN) constitute a cross-link (cyclopeptide (Gly-Asn)). Cystine bridges form between cysteine 5–cysteine 21, cysteine 9–cysteine 23, and cysteine 14–cysteine 28.

In terms of processing, this is a cyclic peptide.

Its function is as follows. Probably participates in a plant defense mechanism. Has anti-HIV activity. This chain is Cycloviolin-A, found in Leonia cymosa (Sacha uba).